The following is a 308-amino-acid chain: MAESLMDIKRKIASTKKTGQITQAMQMVSGAKLSQIEKRAKKYQIYSDKVRQIVTHLAAGQLLELANAAESDTDSGDKSQVISVASLLQKRPVKKTGYLVITSDRGLVGSYNSTVLKAMMQMIKDDHESPDDYVMMAIGGVGADFFKARGLNLAYEYRGVSDIPTFNEVREIVKTAVTMFDNGVFDELYVCYNHHVNTLTSAFRAEKMLPISDLDVSEVADTNVEYLIEPDLDSVLESILPQYAESLIFGAIMDAKTAEHAASTTAMRSATDNANDLISHLSTQYNRARQAAITTEITEIVGGAAALE.

The protein belongs to the ATPase gamma chain family. As to quaternary structure, F-type ATPases have 2 components, CF(1) - the catalytic core - and CF(0) - the membrane proton channel. CF(1) has five subunits: alpha(3), beta(3), gamma(1), delta(1), epsilon(1). CF(0) has three main subunits: a, b and c.

The protein resides in the cell membrane. Its function is as follows. Produces ATP from ADP in the presence of a proton gradient across the membrane. The gamma chain is believed to be important in regulating ATPase activity and the flow of protons through the CF(0) complex. This Lacticaseibacillus paracasei (strain ATCC 334 / BCRC 17002 / CCUG 31169 / CIP 107868 / KCTC 3260 / NRRL B-441) (Lactobacillus paracasei) protein is ATP synthase gamma chain.